A 147-amino-acid chain; its full sequence is Peroxynitrite isomerase (147 aa).

His-137 lines the heme b pocket.

The protein belongs to the nitrobindin family. Homodimer. Heme b is required as a cofactor.

The catalysed reaction is peroxynitrite = nitrate. The protein operates within nitrogen metabolism. Its function is as follows. Heme-binding protein able to scavenge peroxynitrite and to protect free L-tyrosine against peroxynitrite-mediated nitration, by acting as a peroxynitrite isomerase that converts peroxynitrite to nitrate. Therefore, this protein likely plays a role in peroxynitrite sensing and in the detoxification of reactive nitrogen and oxygen species (RNS and ROS, respectively). Is able to bind nitric oxide (NO) in vitro, but may act as a sensor of peroxynitrite levels in vivo. This is Peroxynitrite isomerase from Frankia alni (strain DSM 45986 / CECT 9034 / ACN14a).